The chain runs to 1017 residues: Adhesion G-protein coupled receptor G2 (1017 aa).

The first 37 residues, 1 to 37 (MVFSVRQCGHVGRTEEVLLTFKIFLVIICLHVVLVTS), serve as a signal peptide directing secretion. Residues 38–627 (LEEDTDNSSL…TSVLPAQMMA (590 aa)) are Extracellular-facing. 9 N-linked (GlcNAc...) asparagine glycosylation sites follow: Asn-44, Asn-85, Asn-99, Asn-111, Asn-117, Asn-144, Asn-162, Asn-186, and Asn-194. Residues 301 to 366 (PLSPQPSAPI…NTTSAPPVQT (66 aa)) form a disordered region. Residues 308-320 (APIASSPAIDMPP) are compositionally biased toward low complexity. Composition is skewed to polar residues over residues 321-335 (QSET…THVS) and 344-366 (SFSS…PVQT). N-linked (GlcNAc...) asparagine glycosylation is found at Asn-357, Asn-370, Asn-435, Asn-438, Asn-456, Asn-461, Asn-528, Asn-542, Asn-547, Asn-551, and Asn-597. The 158-residue stretch at 462 to 619 (TTTFVAQDPA…GVLLDLSRTS (158 aa)) folds into the GAIN-B domain. 2 cysteine pairs are disulfide-bonded: Cys-570-Cys-601 and Cys-589-Cys-603. A GPS region spans residues 570–619 (CVFWDLGRNGGRGGWSDNGCSVKDRRLNETICTCSHLTSFGVLLDLSRTS). Residues 608-619 (SFGVLLDLSRTS) are stachel. Residues 628–648 (LTFITYIGCGLSSIFLSVTLV) traverse the membrane as a helical segment. The Cytoplasmic segment spans residues 649–667 (TYIAFEKIRRDYPSKILIQ). Residues 668–688 (LCAALLLLNLVFLLDSWIALY) traverse the membrane as a helical segment. Over 689-693 (KMQGL) the chain is Extracellular. The helical transmembrane segment at 694 to 714 (CISVAVFLHYFLLVSFTWMGL) threads the bilayer. Cys-694 and Cys-778 are disulfide-bonded. Over 715–737 (EAFHMYLALVKVFNTYIRKYILK) the chain is Cytoplasmic. Residues 738-758 (FCIVGWGVPAVVVTIILTISP) traverse the membrane as a helical segment. Over 759 to 789 (DNYGLGSYGKFPNGSPDDFCWINNNAVFYIT) the chain is Extracellular. The chain crosses the membrane as a helical span at residues 790–810 (VVGYFCVIFLLNVSMFIVVLV). Residues 811-834 (QLCRIKKKKQLGAQRKTSIQDLRS) lie on the Cytoplasmic side of the membrane. Residues 835–855 (IAGLTFLLGITWGFAFFAWGP) form a helical membrane-spanning segment. Residues 856–857 (VN) are Extracellular-facing. N-linked (GlcNAc...) asparagine glycosylation is present at Asn-857. The helical transmembrane segment at 858–878 (VTFMYLFAIFNTLQGFFIFIF) threads the bilayer. Asn-868 contributes to the 3beta-hydroxyandrost-5-en-17-one binding site. The Cytoplasmic segment spans residues 879-1017 (YCVAKENVRK…RGSLHFIEQM (139 aa)). A disordered region spans residues 918–939 (QTVNQGVSSSSNSLQSSSNSTN). Residue Ser-1010 is modified to Phosphoserine.

Belongs to the G-protein coupled receptor 2 family. Adhesion G-protein coupled receptor (ADGR) subfamily. As to quaternary structure, heterodimer of 2 chains generated by proteolytic processing; the large extracellular N-terminal fragment and the membrane-bound C-terminal fragment predominantly remain associated and non-covalently linked. Interacts with CFTR. Post-translationally, proteolytically cleaved into 2 subunits, an extracellular subunit and a seven-transmembrane subunit. In terms of processing, highly glycosylated. In terms of tissue distribution, epididymis-specific expression (at protein level). Both subunits are associated with apical membranes of efferent ductule and proximal epididymal duct epithelia. Mainly expressed in the nonciliated principal cells of the proximal excurrent ducts. Specifically over-expressed in Ewing sarcomas but also up-regulated in a number of carcinomas derived from prostate, kidney or lung.

It localises to the apical cell membrane. Its activity is regulated as follows. Forms a heterodimer of 2 chains generated by proteolytic processing that remain associated through non-covalent interactions mediated by the GAIN-B domain. In the inactivated receptor, the Stachel sequence (also named stalk) is embedded in the GAIN-B domain, where it adopts a beta-strand conformation. On activation, the Stachel moves into the 7 transmembrane region and adopts a twisted hook-shaped configuration that forms contacts within the receptor, leading to coupling of a G-alpha protein, which activates signaling. The cleaved GAIN-B and N-terminal domains can then dissociate from the rest of the receptor. Deoxycorticosterone (DOC) acts as an antagonist of ADGRG2. Its function is as follows. Adhesion G-protein coupled receptor (aGPCR) for steroid hormones, such as dehydroepiandrosterone (DHEA; also named 3beta-hydroxyandrost-5-en-17-one) and androstenedione. Involved in a signal transduction pathway controlling epididymal function and male fertility. Ligand binding causes a conformation change that triggers signaling via guanine nucleotide-binding proteins (G proteins) and modulates the activity of downstream effectors, such as adenylate cyclase. ADGRG2 is coupled to G(s) G proteins and mediates activation of adenylate cyclase activity. Also able to couple with G(q) G proteins in vitro. Together with CFTR, required to promote fluid reabsorption within efferent ductule. In Homo sapiens (Human), this protein is Adhesion G-protein coupled receptor G2.